The sequence spans 283 residues: Digeranylgeranylglyceryl phosphate synthase (283 aa).

A run of 8 helical transmembrane segments spans residues 21 to 41, 45 to 65, 97 to 117, 135 to 155, 158 to 178, 204 to 224, 226 to 246, and 261 to 281; these read ITASIGGIIGYLISSNFEIDI, LLVFFVVFFVCAYGNVINDIF, LILGLVLSLFINIYALIIAVI, IGNFIIGYLTGSVFLFGGVAG, VMPVVILFLCSLLSIWGREIV, LYFATFLVVLAVILSPLPYIL, IFGIWYLILIAICDILFIYAM, and VSKFLKIIMNIVLLAFIVGAI.

This sequence belongs to the UbiA prenyltransferase family. DGGGP synthase subfamily. Mg(2+) serves as cofactor.

The protein localises to the cell membrane. The catalysed reaction is sn-3-O-(geranylgeranyl)glycerol 1-phosphate + (2E,6E,10E)-geranylgeranyl diphosphate = 2,3-bis-O-(geranylgeranyl)-sn-glycerol 1-phosphate + diphosphate. It functions in the pathway membrane lipid metabolism; glycerophospholipid metabolism. Prenyltransferase that catalyzes the transfer of the geranylgeranyl moiety of geranylgeranyl diphosphate (GGPP) to the C2 hydroxyl of (S)-3-O-geranylgeranylglyceryl phosphate (GGGP). This reaction is the second ether-bond-formation step in the biosynthesis of archaeal membrane lipids. The sequence is that of Digeranylgeranylglyceryl phosphate synthase from Methanocaldococcus jannaschii (strain ATCC 43067 / DSM 2661 / JAL-1 / JCM 10045 / NBRC 100440) (Methanococcus jannaschii).